The chain runs to 155 residues: Ribosomal RNA large subunit methyltransferase H (155 aa).

Residues L72, G103, and 122–127 (LSALTL) contribute to the S-adenosyl-L-methionine site.

The protein belongs to the RNA methyltransferase RlmH family. Homodimer.

The protein localises to the cytoplasm. The enzyme catalyses pseudouridine(1915) in 23S rRNA + S-adenosyl-L-methionine = N(3)-methylpseudouridine(1915) in 23S rRNA + S-adenosyl-L-homocysteine + H(+). Functionally, specifically methylates the pseudouridine at position 1915 (m3Psi1915) in 23S rRNA. The polypeptide is Ribosomal RNA large subunit methyltransferase H (Citrobacter koseri (strain ATCC BAA-895 / CDC 4225-83 / SGSC4696)).